The following is a 333-amino-acid chain: Glycogenin-1 (333 aa).

Position 2 is an N-acetylthreonine (Thr2). The UDP site is built by Leu9, Thr11, Asn12, and Tyr15. Residues Leu9, Thr11, Asn12, and Tyr15 each coordinate UDP-alpha-D-glucose. Ser44 carries the phosphoserine modification. Arg77 provides a ligand contact to UDP. UDP-alpha-D-glucose-binding residues include Arg77, Lys86, Asp102, Ala103, Asp104, Asn133, Ser134, Asp160, Asp163, and Gln164. Residues Asp102, Ala103, and Asp104 each contribute to the UDP site. Residue Asp102 participates in Mn(2+) binding. Position 104 (Asp104) interacts with Mn(2+). The O-linked (Glc...) tyrosine glycan is linked to Tyr195. UDP is bound by residues His212, Gly215, and Lys218. Position 212 (His212) interacts with Mn(2+). Gly215 and Lys218 together coordinate UDP-alpha-D-glucose. The segment at 284-316 is interaction with GYS1; sequence SDLSFGEAPAAPQPSMSSEERKERWEQGQADYM. The segment at 290-316 is disordered; it reads EAPAAPQPSMSSEERKERWEQGQADYM.

The protein belongs to the glycosyltransferase 8 family. Glycogenin subfamily. Part of the GYS1-GYG1 complex, a heterooctamer composed of a tetramer of GYS1 and 2 dimers of GYG1, where each GYS1 protomer binds to one GYG1 subunit (via GYG1 C-terminus); the GYS1 tetramer may dissociate from GYG1 dimers to continue glycogen polymerization on its own. May also form a heterooctamer complex with GYS2. It depends on Mn(2+) as a cofactor. Post-translationally, self-glycosylated by the transfer of glucose residues from UDP-glucose to itself, forming an alpha-1,4-glycan of around 10 residues attached to Tyr-195. In terms of processing, phosphorylated. Skeletal muscle, heart, to a lesser extent in kidney, lung and brain.

It is found in the cytoplasm. Its subcellular location is the nucleus. The catalysed reaction is L-tyrosyl-[glycogenin] + UDP-alpha-D-glucose = alpha-D-glucosyl-L-tyrosyl-[glycogenin] + UDP + H(+). The enzyme catalyses [1,4-alpha-D-glucosyl](n)-L-tyrosyl-[glycogenin] + UDP-alpha-D-glucose = [1,4-alpha-D-glucosyl](n+1)-L-tyrosyl-[glycogenin] + UDP + H(+). It participates in glycan biosynthesis; glycogen biosynthesis. Functionally, glycogenin participates in the glycogen biosynthetic process along with glycogen synthase and glycogen branching enzyme. It catalyzes the formation of a short alpha (1,4)-glucosyl chain covalently attached via a glucose 1-O-tyrosyl linkage to internal tyrosine residues and these chains act as primers for the elongation reaction catalyzed by glycogen synthase. This chain is Glycogenin-1, found in Mus musculus (Mouse).